The chain runs to 100 residues: NAD(P)H-quinone oxidoreductase subunit 4L, chloroplastic (100 aa).

Transmembrane regions (helical) follow at residues 1 to 21, 31 to 51, and 63 to 83; these read MLEH…YGLV, MCLE…SNFF, and IFVI…VLAI.

Belongs to the complex I subunit 4L family. In terms of assembly, NDH is composed of at least 16 different subunits, 5 of which are encoded in the nucleus.

The protein resides in the plastid. Its subcellular location is the chloroplast thylakoid membrane. The catalysed reaction is a plastoquinone + NADH + (n+1) H(+)(in) = a plastoquinol + NAD(+) + n H(+)(out). The enzyme catalyses a plastoquinone + NADPH + (n+1) H(+)(in) = a plastoquinol + NADP(+) + n H(+)(out). Its function is as follows. NDH shuttles electrons from NAD(P)H:plastoquinone, via FMN and iron-sulfur (Fe-S) centers, to quinones in the photosynthetic chain and possibly in a chloroplast respiratory chain. The immediate electron acceptor for the enzyme in this species is believed to be plastoquinone. Couples the redox reaction to proton translocation, and thus conserves the redox energy in a proton gradient. This chain is NAD(P)H-quinone oxidoreductase subunit 4L, chloroplastic, found in Cryptomeria japonica (Japanese cedar).